Here is a 112-residue protein sequence, read N- to C-terminus: Nitrogen regulatory protein P-II (112 aa).

The residue at position 51 (Tyr-51) is an O-UMP-tyrosine.

Belongs to the P(II) protein family. In terms of assembly, homotrimer.

In nitrogen-limiting conditions, when the ratio of Gln to 2-ketoglutarate decreases, P-II is uridylylated to P-II-UMP. P-II-UMP allows the deadenylation of glutamine synthetase (GS), thus activating the enzyme. Conversely, in nitrogen excess P-II is deuridylated and promotes the adenylation of GS. P-II indirectly controls the transcription of the GS gene (glnA). P-II prevents NR-II-catalyzed conversion of NR-I to NR-I-phosphate, the transcriptional activator of glnA. When P-II is uridylylated to P-II-UMP, these events are reversed. The sequence is that of Nitrogen regulatory protein P-II (glnB) from Aquifex aeolicus (strain VF5).